The following is a 397-amino-acid chain: MKRFKKASSIIETLKQQGHEAYFVGGSVRDLIIDRPIGDIDIATSALPEEVMAIFPRHVPVGLEHGTVIVVENGEPYEVTTFRTESEYEDFRRPSSVQFVRSLEEDLKRRDFTMNAIAMTEEGEMVDLFAGQEAIQKREIVTVGNAADRFQEDALRMMRGIRFVSTLGFSLETKTKQAIETYGHLLEHIAIERITVEFEKLLTGTYCVKALKELVETKLFSHLPYLQMSEERLLKATQYNWDSFETDIEAWAFFLYCIGEEHPAVFLRQWKFSNKKIKDIVAVLLTVRKRKEKDWDTVLLYKTGIHIAEMAERVYEAMIESYDHTSVKRVQTLFQALPIKNRQEMNVTGNDLLNWASKKPGPWVAEMIQKIEEAIVQGNVVNEKECIREWLQECNLL.

Glycine 26 and arginine 29 together coordinate ATP. 2 residues coordinate CTP: glycine 26 and arginine 29. Residues aspartate 39 and aspartate 41 each coordinate Mg(2+). Arginine 110, aspartate 153, arginine 156, arginine 159, and arginine 162 together coordinate ATP. Residues arginine 110, aspartate 153, arginine 156, arginine 159, and arginine 162 each contribute to the CTP site.

This sequence belongs to the tRNA nucleotidyltransferase/poly(A) polymerase family. Bacterial CCA-adding enzyme type 3 subfamily. Homodimer. Requires Mg(2+) as cofactor.

The catalysed reaction is a tRNA precursor + 2 CTP + ATP = a tRNA with a 3' CCA end + 3 diphosphate. It carries out the reaction a tRNA with a 3' CCA end + 2 CTP + ATP = a tRNA with a 3' CCACCA end + 3 diphosphate. Catalyzes the addition and repair of the essential 3'-terminal CCA sequence in tRNAs without using a nucleic acid template. Adds these three nucleotides in the order of C, C, and A to the tRNA nucleotide-73, using CTP and ATP as substrates and producing inorganic pyrophosphate. tRNA 3'-terminal CCA addition is required both for tRNA processing and repair. Also involved in tRNA surveillance by mediating tandem CCA addition to generate a CCACCA at the 3' terminus of unstable tRNAs. While stable tRNAs receive only 3'-terminal CCA, unstable tRNAs are marked with CCACCA and rapidly degraded. This is CCA-adding enzyme from Bacillus cereus (strain ATCC 10987 / NRS 248).